The primary structure comprises 484 residues: ATP synthase subunit beta (484 aa).

162–169 (GGAGVGKT) is a binding site for ATP.

The protein belongs to the ATPase alpha/beta chains family. As to quaternary structure, F-type ATPases have 2 components, CF(1) - the catalytic core - and CF(0) - the membrane proton channel. CF(1) has five subunits: alpha(3), beta(3), gamma(1), delta(1), epsilon(1). CF(0) has four main subunits: a(1), b(1), b'(1) and c(9-12).

Its subcellular location is the cellular thylakoid membrane. It catalyses the reaction ATP + H2O + 4 H(+)(in) = ADP + phosphate + 5 H(+)(out). Its function is as follows. Produces ATP from ADP in the presence of a proton gradient across the membrane. The catalytic sites are hosted primarily by the beta subunits. The polypeptide is ATP synthase subunit beta (Trichodesmium erythraeum (strain IMS101)).